The chain runs to 308 residues: ABC transporter protein AbcA (308 aa).

The ABC transporter domain occupies 6-245 (LAVSGVNKSF…YHKLLHMEGD (240 aa)). 58–65 (GHNGAGKS) provides a ligand contact to ATP.

This sequence belongs to the ABC transporter superfamily.

Functionally, influences the expression of the surface array protein gene (vapA). May have both regulatory and transport activities. The polypeptide is ABC transporter protein AbcA (abcA) (Aeromonas salmonicida).